The following is a 37-amino-acid chain: Potassium channel toxin alpha-KTx 1.13 (37 aa).

Position 1 is a pyrrolidone carboxylic acid (Gln1). 3 disulfide bridges follow: Cys7–Cys28, Cys13–Cys33, and Cys17–Cys35. Positions 26-33 (GKCMNKKC) are interaction with Ca(2+)-activated K(+) channels.

The protein belongs to the short scorpion toxin superfamily. Potassium channel inhibitor family. Alpha-KTx 01 subfamily. Expressed by the venom gland.

Its subcellular location is the secreted. In terms of biological role, potent selective inhibitor of high conductance (maxi-K), different medium and small conductance calcium-activated potassium channels (KCa1.1/KCNMA1 and others), as well as a voltage-dependent potassium channel (Kv1.3/KCNA3&gt;Kv1.2/KCNA2&gt;Kv1.6/KCNA3&gt;&gt;Shaker/Sh). It blocks channel activity by a simple bimolecular inhibition process. Its function is as follows. Has a pH-specific antimicrobial activity against bacteria (B.subtilis, E.coli and S.aureus) and the fungus C.albicans. The protein is Potassium channel toxin alpha-KTx 1.13 of Leiurus hebraeus (Hebrew deathstalker scorpion).